The primary structure comprises 286 residues: Phosphatidylserine decarboxylase proenzyme (286 aa).

Catalysis depends on charge relay system; for autoendoproteolytic cleavage activity residues D90, H147, and S252. The Schiff-base intermediate with substrate; via pyruvic acid; for decarboxylase activity role is filled by S252. Residue S252 is modified to Pyruvic acid (Ser); by autocatalysis.

The protein belongs to the phosphatidylserine decarboxylase family. PSD-B subfamily. Prokaryotic type I sub-subfamily. As to quaternary structure, heterodimer of a large membrane-associated beta subunit and a small pyruvoyl-containing alpha subunit. Pyruvate is required as a cofactor. Post-translationally, is synthesized initially as an inactive proenzyme. Formation of the active enzyme involves a self-maturation process in which the active site pyruvoyl group is generated from an internal serine residue via an autocatalytic post-translational modification. Two non-identical subunits are generated from the proenzyme in this reaction, and the pyruvate is formed at the N-terminus of the alpha chain, which is derived from the carboxyl end of the proenzyme. The autoendoproteolytic cleavage occurs by a canonical serine protease mechanism, in which the side chain hydroxyl group of the serine supplies its oxygen atom to form the C-terminus of the beta chain, while the remainder of the serine residue undergoes an oxidative deamination to produce ammonia and the pyruvoyl prosthetic group on the alpha chain. During this reaction, the Ser that is part of the protease active site of the proenzyme becomes the pyruvoyl prosthetic group, which constitutes an essential element of the active site of the mature decarboxylase.

The protein localises to the cell membrane. It carries out the reaction a 1,2-diacyl-sn-glycero-3-phospho-L-serine + H(+) = a 1,2-diacyl-sn-glycero-3-phosphoethanolamine + CO2. It participates in phospholipid metabolism; phosphatidylethanolamine biosynthesis; phosphatidylethanolamine from CDP-diacylglycerol: step 2/2. Its function is as follows. Catalyzes the formation of phosphatidylethanolamine (PtdEtn) from phosphatidylserine (PtdSer). The polypeptide is Phosphatidylserine decarboxylase proenzyme (Ectopseudomonas mendocina (strain ymp) (Pseudomonas mendocina)).